Consider the following 342-residue polypeptide: Heparan sulfate glucosamine 3-O-sulfotransferase 6 (342 aa).

At 1–31 (MAGSGGLGGGAGDLQGAGTGQGTALRALRAP) the chain is on the cytoplasmic side. The chain crosses the membrane as a helical; Signal-anchor for type II membrane protein span at residues 32–49 (LALVVLLLSAYCLFALPG). Residues 50 to 342 (RCPPAARAPA…QMTGQDFGWD (293 aa)) lie on the Lumenal side of the membrane. The tract at residues 56-75 (RAPAPVPAPAEPPHTSLRLR) is disordered. 3'-phosphoadenylyl sulfate is bound at residue 100–104 (KGGTR). Residues 122–128 (EPHFFDR) and 153–156 (KTPS) contribute to the substrate site. 3'-phosphoadenylyl sulfate-binding residues include R181 and S189. 220–221 (WS) provides a ligand contact to substrate. N281 carries N-linked (GlcNAc...) asparagine glycosylation. Cysteines 288 and 300 form a disulfide. 305-309 (KGRPH) contributes to the 3'-phosphoadenylyl sulfate binding site.

The protein belongs to the sulfotransferase 1 family. As to expression, expressed in liver and kidney, followed by heart, brain, lung and testis.

The protein resides in the golgi apparatus membrane. It carries out the reaction alpha-D-glucosaminyl-[heparan sulfate](n) + 3'-phosphoadenylyl sulfate = 3-sulfo-alpha-D-glucosaminyl-[heparan sulfate](n) + adenosine 3',5'-bisphosphate + H(+). Functionally, sulfotransferase that utilizes 3'-phospho-5'-adenylyl sulfate (PAPS) to catalyze the transfer of a sulfo group to heparan sulfate. Unlike 3-OST-1, does not convert non-anticoagulant heparan sulfate to anticoagulant heparan sulfate. This chain is Heparan sulfate glucosamine 3-O-sulfotransferase 6 (Hs3st6), found in Mus musculus (Mouse).